The primary structure comprises 159 residues: Fimbrial protein EcpB (159 aa).

Positions 1–6 (MYKQKG) are cleaved as a propeptide — leader sequence. Phe7 bears the N-methylphenylalanine mark. The chain crosses the membrane as a helical span at residues 7–29 (FTLIELMIVIAIIGILAAIALPL). The cysteines at positions 137 and 156 are disulfide-linked.

It belongs to the N-Me-Phe pilin family.

It is found in the fimbrium. It localises to the membrane. This is Fimbrial protein EcpB (ecpB) from Eikenella corrodens.